Consider the following 489-residue polypeptide: Cobyric acid synthase (489 aa).

Residues 251 to 444 (GLIIAVIRLP…LHGIFANDTF (194 aa)) form the GATase cobBQ-type domain. Catalysis depends on Cys329, which acts as the Nucleophile. The active site involves His436.

The protein belongs to the CobB/CobQ family. CobQ subfamily.

It participates in cofactor biosynthesis; adenosylcobalamin biosynthesis. In terms of biological role, catalyzes amidations at positions B, D, E, and G on adenosylcobyrinic A,C-diamide. NH(2) groups are provided by glutamine, and one molecule of ATP is hydrogenolyzed for each amidation. This chain is Cobyric acid synthase, found in Chloroflexus aurantiacus (strain ATCC 29366 / DSM 635 / J-10-fl).